The following is a 432-amino-acid chain: MAIKDLTATTGDSSLPLIKSPPSETTGGDRTSALQTLGNIIVSIVGTGVLGLPYAFRIAGWLAGSLGVIIVGFATYYCMLLLIQCRDKLESEEGEEESKTYGDLGFKCMGTKGRYLTEFLIFTAQCGGSVAYLVFIGRNLSSIFSSYGLSMVSFILILVPIEVGLSWITSLSALSPFSIFADICNIIAMCFVVKENVEMVIEGDFSFSDRTAISSTIGGLPFAGGVAVFCFEGFAMTLALESSMREREAFPKLLAKVLAGITFVYVLFGFCGYMAYGDQTKDIITLNLPNNWSAIAVQIGLCVGLTFTFPIMVHPLNEIIEQKLKRIDWLQKHHNGYSNETGSVSKFAIFTTRTLLVVGLAAIASLVPGFGTFASLVGSTLCALISFVLPASYHLTLLGPSLNVWNKSIDVFIVICGLIFAVYGTYNTIVGV.

Residues 1–30 (MAIKDLTATTGDSSLPLIKSPPSETTGGDR) are disordered. The Cytoplasmic portion of the chain corresponds to 1 to 35 (MAIKDLTATTGDSSLPLIKSPPSETTGGDRTSALQ). Residues 36–56 (TLGNIIVSIVGTGVLGLPYAF) traverse the membrane as a helical segment. Residues 57-62 (RIAGWL) are Lumenal-facing. Residues 63 to 83 (AGSLGVIIVGFATYYCMLLLI) traverse the membrane as a helical segment. Topologically, residues 84–115 (QCRDKLESEEGEEESKTYGDLGFKCMGTKGRY) are cytoplasmic. The chain crosses the membrane as a helical span at residues 116-136 (LTEFLIFTAQCGGSVAYLVFI). The Lumenal portion of the chain corresponds to 137–147 (GRNLSSIFSSY). Residues 148 to 168 (GLSMVSFILILVPIEVGLSWI) traverse the membrane as a helical segment. The Cytoplasmic segment spans residues 169–172 (TSLS). The helical transmembrane segment at 173 to 193 (ALSPFSIFADICNIIAMCFVV) threads the bilayer. The Lumenal portion of the chain corresponds to 194–219 (KENVEMVIEGDFSFSDRTAISSTIGG). A helical membrane pass occupies residues 220-240 (LPFAGGVAVFCFEGFAMTLAL). At 241–256 (ESSMREREAFPKLLAK) the chain is on the cytoplasmic side. Residues 257–277 (VLAGITFVYVLFGFCGYMAYG) form a helical membrane-spanning segment. Residues 278–292 (DQTKDIITLNLPNNW) lie on the Lumenal side of the membrane. The helical transmembrane segment at 293 to 313 (SAIAVQIGLCVGLTFTFPIMV) threads the bilayer. The Cytoplasmic segment spans residues 314–353 (HPLNEIIEQKLKRIDWLQKHHNGYSNETGSVSKFAIFTTR). Residues 354-374 (TLLVVGLAAIASLVPGFGTFA) traverse the membrane as a helical segment. Topologically, residues 375–379 (SLVGS) are lumenal. A helical transmembrane segment spans residues 380-400 (TLCALISFVLPASYHLTLLGP). Residues 401–410 (SLNVWNKSID) lie on the Cytoplasmic side of the membrane. A helical transmembrane segment spans residues 411–431 (VFIVICGLIFAVYGTYNTIVG). Position 432 (Val432) is a topological domain, lumenal.

It belongs to the amino acid/polyamine transporter 2 family. Amino acid/auxin permease (AAAP) (TC 2.A.18.8) subfamily. In terms of tissue distribution, ubiquitous. Highly expressed in flowers and cauline leaves and at lower levels in stems, leaves and roots.

The protein resides in the endoplasmic reticulum membrane. Translocates aromatic and neutral amino acids such as tyrosine, tryptophan, phenylalanine, histidine, proline, leucine, valine, glutamine, as well as arginine. Transports the auxins indole-3-acetic acid (IAA) and 2,4-dichlorophenoxyacetic acid (2,4-D). This chain is Amino acid transporter ANT1, found in Arabidopsis thaliana (Mouse-ear cress).